A 151-amino-acid polypeptide reads, in one-letter code: Small ribosomal subunit protein bS6 (151 aa).

The disordered stretch occupies residues 94-151 (EEHEQGPSAMMRKRDDDDRGERGERPRGPRPERGERGERGERGPRRPREDNIGEEGLY). The segment covering 105 to 144 (RKRDDDDRGERGERPRGPRPERGERGERGERGPRRPREDN) has biased composition (basic and acidic residues).

Belongs to the bacterial ribosomal protein bS6 family.

In terms of biological role, binds together with bS18 to 16S ribosomal RNA. This is Small ribosomal subunit protein bS6 from Beijerinckia indica subsp. indica (strain ATCC 9039 / DSM 1715 / NCIMB 8712).